The primary structure comprises 137 residues: Small ribosomal subunit protein uS12 (137 aa).

Disordered stretches follow at residues 1–22 (MPTI…SKSP) and 37–57 (KNPS…TPKK). Residues 9–19 (RKGRKSHKGKS) are compositionally biased toward basic residues. 3-methylthioaspartic acid is present on Asp102.

This sequence belongs to the universal ribosomal protein uS12 family. As to quaternary structure, part of the 30S ribosomal subunit. Contacts proteins S8 and S17. May interact with IF1 in the 30S initiation complex.

Its function is as follows. With S4 and S5 plays an important role in translational accuracy. Interacts with and stabilizes bases of the 16S rRNA that are involved in tRNA selection in the A site and with the mRNA backbone. Located at the interface of the 30S and 50S subunits, it traverses the body of the 30S subunit contacting proteins on the other side and probably holding the rRNA structure together. The combined cluster of proteins S8, S12 and S17 appears to hold together the shoulder and platform of the 30S subunit. The polypeptide is Small ribosomal subunit protein uS12 (Limosilactobacillus fermentum (strain NBRC 3956 / LMG 18251) (Lactobacillus fermentum)).